The sequence spans 269 residues: Tryptophan synthase alpha chain (269 aa).

Catalysis depends on proton acceptor residues E54 and D65.

It belongs to the TrpA family. As to quaternary structure, tetramer of two alpha and two beta chains.

The enzyme catalyses (1S,2R)-1-C-(indol-3-yl)glycerol 3-phosphate + L-serine = D-glyceraldehyde 3-phosphate + L-tryptophan + H2O. The protein operates within amino-acid biosynthesis; L-tryptophan biosynthesis; L-tryptophan from chorismate: step 5/5. Its function is as follows. The alpha subunit is responsible for the aldol cleavage of indoleglycerol phosphate to indole and glyceraldehyde 3-phosphate. The chain is Tryptophan synthase alpha chain from Synechococcus sp. (strain CC9902).